The sequence spans 78 residues: Acyl carrier protein (78 aa).

The region spanning 2 to 77 is the Carrier domain; sequence SSIEERVKKI…QATSYVEANL (76 aa). O-(pantetheine 4'-phosphoryl)serine is present on S37.

Belongs to the acyl carrier protein (ACP) family. Post-translationally, 4'-phosphopantetheine is transferred from CoA to a specific serine of apo-ACP by AcpS. This modification is essential for activity because fatty acids are bound in thioester linkage to the sulfhydryl of the prosthetic group.

It localises to the cytoplasm. Its pathway is lipid metabolism; fatty acid biosynthesis. Functionally, carrier of the growing fatty acid chain in fatty acid biosynthesis. This Hydrogenovibrio crunogenus (strain DSM 25203 / XCL-2) (Thiomicrospira crunogena) protein is Acyl carrier protein.